We begin with the raw amino-acid sequence, 337 residues long: Ornithine carbamoyltransferase, catabolic (337 aa).

Residues 57 to 60 (STRT), Q84, R108, and 135 to 138 (HPTQ) contribute to the carbamoyl phosphate site. Residues N167, D231, and 235–236 (SM) each bind L-ornithine. Carbamoyl phosphate-binding positions include 272 to 273 (CL) and R317.

The protein belongs to the aspartate/ornithine carbamoyltransferase superfamily. OTCase family.

Its subcellular location is the cytoplasm. The catalysed reaction is carbamoyl phosphate + L-ornithine = L-citrulline + phosphate + H(+). The protein operates within amino-acid degradation; L-arginine degradation via ADI pathway; carbamoyl phosphate from L-arginine: step 2/2. In terms of biological role, reversibly catalyzes the transfer of the carbamoyl group from carbamoyl phosphate (CP) to the N(epsilon) atom of ornithine (ORN) to produce L-citrulline. The sequence is that of Ornithine carbamoyltransferase, catabolic (arcB) from Streptococcus pyogenes serotype M1.